The chain runs to 135 residues: Methylglyoxal synthase (135 aa).

Residues 1–135 (MQKTLALVAH…GLYERAVPEF (135 aa)) form the MGS-like domain. Residues His10, Lys14, 36–39 (TGTT), and 56–57 (SG) each bind substrate. Catalysis depends on Asp62, which acts as the Proton donor/acceptor. His89 is a binding site for substrate.

The protein belongs to the methylglyoxal synthase family.

The enzyme catalyses dihydroxyacetone phosphate = methylglyoxal + phosphate. In terms of biological role, catalyzes the formation of methylglyoxal from dihydroxyacetone phosphate. The sequence is that of Methylglyoxal synthase from Pseudoalteromonas atlantica (strain T6c / ATCC BAA-1087).